A 23-amino-acid polypeptide reads, in one-letter code: Toxin Acra2 (23 aa).

An LCN-type CS-alpha/beta domain is found at 2–23; that stretch reads KDGYIVDSNGCAPECFPTNXGC.

In terms of processing, contains 4 disulfide bonds. Expressed by the venom gland.

The protein resides in the secreted. Functionally, excitatory insect toxins induce a spastic paralysis. They bind voltage-independently at site-4 of sodium channels (Nav) and shift the voltage of activation toward more negative potentials thereby affecting sodium channel activation and promoting spontaneous and repetitive firing. Is lethal to mice. Is about 1% of the total protein in the venom. The chain is Toxin Acra2 from Androctonus crassicauda (Arabian fat-tailed scorpion).